A 207-amino-acid polypeptide reads, in one-letter code: ATP-dependent dethiobiotin synthetase BioD (207 aa).

Residue 13-18 (EVGKTV) coordinates ATP. Threonine 17 provides a ligand contact to Mg(2+). Residue lysine 33 is part of the active site. ATP-binding positions include aspartate 44 and 100-103 (EGAG). The Mg(2+) site is built by aspartate 44 and glutamate 100.

This sequence belongs to the dethiobiotin synthetase family. In terms of assembly, homodimer. It depends on Mg(2+) as a cofactor.

It is found in the cytoplasm. It catalyses the reaction (7R,8S)-7,8-diammoniononanoate + CO2 + ATP = (4R,5S)-dethiobiotin + ADP + phosphate + 3 H(+). It functions in the pathway cofactor biosynthesis; biotin biosynthesis; biotin from 7,8-diaminononanoate: step 1/2. Its function is as follows. Catalyzes a mechanistically unusual reaction, the ATP-dependent insertion of CO2 between the N7 and N8 nitrogen atoms of 7,8-diaminopelargonic acid (DAPA, also called 7,8-diammoniononanoate) to form a ureido ring. This Christiangramia forsetii (strain DSM 17595 / CGMCC 1.15422 / KT0803) (Gramella forsetii) protein is ATP-dependent dethiobiotin synthetase BioD.